The primary structure comprises 205 residues: Ribosomal RNA small subunit methyltransferase G (205 aa).

S-adenosyl-L-methionine-binding positions include Gly-66, Phe-71, 119–120 (IE), and Arg-135.

It belongs to the methyltransferase superfamily. RNA methyltransferase RsmG family.

It localises to the cytoplasm. It catalyses the reaction guanosine(527) in 16S rRNA + S-adenosyl-L-methionine = N(7)-methylguanosine(527) in 16S rRNA + S-adenosyl-L-homocysteine. Its function is as follows. Specifically methylates the N7 position of guanine in position 527 of 16S rRNA. The sequence is that of Ribosomal RNA small subunit methyltransferase G from Rhizobium etli (strain CIAT 652).